The chain runs to 251 residues: Probable transcriptional regulatory protein BLD_0450 (251 aa).

Belongs to the TACO1 family.

It localises to the cytoplasm. The sequence is that of Probable transcriptional regulatory protein BLD_0450 from Bifidobacterium longum (strain DJO10A).